The sequence spans 208 residues: Glutathione S-transferase (208 aa).

The GST N-terminal domain occupies 1–78 (MSYKLTYFPI…HLARKFNLNG (78 aa)). Glutathione-binding positions include tyrosine 7, lysine 42, 49 to 50 (QL), and 62 to 63 (QS). Positions 80 to 200 (NNAETSYVDM…YCAKRNASKM (121 aa)) constitute a GST C-terminal domain.

Belongs to the GST superfamily. Pi family. In terms of assembly, homodimer.

The catalysed reaction is RX + glutathione = an S-substituted glutathione + a halide anion + H(+). Its function is as follows. Conjugation of reduced glutathione to a wide number of exogenous and endogenous hydrophobic electrophiles. This Dirofilaria immitis (Canine heartworm) protein is Glutathione S-transferase.